Consider the following 359-residue polypeptide: Stearoyl-CoA desaturase (359 aa).

Topologically, residues 1–72 are cytoplasmic; that stretch reads MPAHLLQEEI…EGPRPKLEYV (72 aa). Residues 73–93 traverse the membrane as a helical segment; the sequence is WRNIILMSLLHLGALYGIILI. Asn75 serves as a coordination point for substrate. At 94 to 97 the chain is on the lumenal side; that stretch reads PTCK. A helical membrane pass occupies residues 98 to 118; the sequence is IYTLLWAFAYYLLSAVGVTAG. Residues 119–217 are Cytoplasmic-facing; sequence AHRLWSHRTY…EKLVMFQRRY (99 aa). Fe cation contacts are provided by His120 and His125. Positions 120-125 match the Histidine box-1 motif; it reads HRLWSH. Substrate-binding residues include Asn148, Arg155, and Asp156. Residues His157, His160, and His161 each coordinate Fe cation. Residues 157-161 carry the Histidine box-2 motif; that stretch reads HRAHH. Substrate-binding residues include Arg188 and Lys189. The residue at position 203 (Ser203) is a Phosphoserine. Residues 218–237 form a helical membrane-spanning segment; the sequence is YKPGILLMCFILPTIVPWYC. The Lumenal segment spans residues 238 to 241; that stretch reads WGEA. A helical membrane pass occupies residues 242–263; it reads FPQSLFVATFLRYAIVLNATWL. Trp262 serves as a coordination point for substrate. Residues 264–359 lie on the Cytoplasmic side of the membrane; that stretch reads VNSAAHLYGY…RTGDESYKSG (96 aa). The Fe cation site is built by His269, His298, His301, and His302. The Histidine box-3 motif lies at 298–302; it reads HNYHH.

Belongs to the fatty acid desaturase type 1 family. Fe(2+) is required as a cofactor.

The protein localises to the endoplasmic reticulum membrane. The enzyme catalyses octadecanoyl-CoA + 2 Fe(II)-[cytochrome b5] + O2 + 2 H(+) = (9Z)-octadecenoyl-CoA + 2 Fe(III)-[cytochrome b5] + 2 H2O. It catalyses the reaction hexadecanoyl-CoA + 2 Fe(II)-[cytochrome b5] + O2 + 2 H(+) = (9Z)-hexadecenoyl-CoA + 2 Fe(III)-[cytochrome b5] + 2 H2O. Its function is as follows. Stearoyl-CoA desaturase that utilizes O(2) and electrons from reduced cytochrome b5 to introduce the first double bond into saturated fatty acyl-CoA substrates. Catalyzes the insertion of a cis double bond at the delta-9 position into fatty acyl-CoA substrates including palmitoyl-CoA and stearoyl-CoA. Gives rise to a mixture of 16:1 and 18:1 unsaturated fatty acids. Plays an important role in lipid biosynthesis. Plays an important role in regulating the expression of genes that are involved in lipogenesis and in regulating mitochondrial fatty acid oxidation. Plays an important role in body energy homeostasis. Contributes to the biosynthesis of membrane phospholipids, cholesterol esters and triglycerides. This is Stearoyl-CoA desaturase (SCD) from Sus scrofa (Pig).